We begin with the raw amino-acid sequence, 346 residues long: Golgi to ER traffic protein 4 (346 aa).

Residues 317–346 (GQNQGGSRRTPQGRSQSKTVEAPPASMELD) form a disordered region. Residues 321–335 (GGSRRTPQGRSQSKT) show a composition bias toward polar residues.

The protein belongs to the GET4 family. In terms of assembly, component of the get4/get5/sgt2 sorting complex.

It is found in the cytoplasm. Its function is as follows. Component of the get4/get5/sgt2 sorting complex involved in the GET (guided entry of TA proteins) pathway that leads to the insertion of tail-anchored (TA) proteins into the endoplasmic reticulum. Get4 and get5 form an obligate complex that catalyzes the transfer of tail-anchored proteins destined to the endoplasmic reticulum from sgt2 to the cytosolic targeting factor which then targets the TA protein to the ER membrane via get1/get2. This Aspergillus fumigatus (strain ATCC MYA-4609 / CBS 101355 / FGSC A1100 / Af293) (Neosartorya fumigata) protein is Golgi to ER traffic protein 4.